Consider the following 312-residue polypeptide: Olfactory receptor 1D5 (312 aa).

Over 1 to 25 the chain is Extracellular; it reads MDGDNQSENSQFLLLGISESPEQQQ. Residue asparagine 5 is glycosylated (N-linked (GlcNAc...) asparagine). A helical transmembrane segment spans residues 26–49; that stretch reads ILFWMFLSMYLVTVLGNVLIILAI. Residues 50–57 lie on the Cytoplasmic side of the membrane; it reads SSDSHLHT. The chain crosses the membrane as a helical span at residues 58–79; it reads PMYFFLANLSFTDLFFVTNTIP. Residues 80 to 100 lie on the Extracellular side of the membrane; that stretch reads KMLVNFQSQNKAISYAGCLTQ. Cysteine 97 and cysteine 189 are joined by a disulfide. Residues 101–120 traverse the membrane as a helical segment; the sequence is LYFLVSLVTLDNLILAVMAY. Topologically, residues 121 to 140 are cytoplasmic; the sequence is DRYVAICCPLHYVTAMSPGL. The chain crosses the membrane as a helical span at residues 141-158; the sequence is CVLLLSLCWGLSVLYGLL. Topologically, residues 159 to 196 are extracellular; that stretch reads LTLLLTRVTFCGPREIHYLFCDMYILLRLACSNTHIIH. A helical membrane pass occupies residues 197–220; sequence TVLVATGCFIFLTPLGFMTTSYVC. At 221 to 237 the chain is on the cytoplasmic side; the sequence is IVRTILQIPSASKKYKA. Residues 238 to 260 traverse the membrane as a helical segment; it reads FSTCASHLGVVSLFYGTLAMVYL. At 261-271 the chain is on the extracellular side; the sequence is QPLHTYSMKDS. Residues 272-291 form a helical membrane-spanning segment; that stretch reads VATVMYAVVTPMMNPFIYSL. Over 292–312 the chain is Cytoplasmic; the sequence is RNKDMHGALGRVLRRLFQRPK.

It belongs to the G-protein coupled receptor 1 family.

It is found in the cell membrane. Odorant receptor. The sequence is that of Olfactory receptor 1D5 (OR1D5) from Pan paniscus (Pygmy chimpanzee).